Here is a 232-residue protein sequence, read N- to C-terminus: Large ribosomal subunit protein uL1 (232 aa).

The protein belongs to the universal ribosomal protein uL1 family. As to quaternary structure, part of the 50S ribosomal subunit.

Functionally, binds directly to 23S rRNA. The L1 stalk is quite mobile in the ribosome, and is involved in E site tRNA release. In terms of biological role, protein L1 is also a translational repressor protein, it controls the translation of the L11 operon by binding to its mRNA. The polypeptide is Large ribosomal subunit protein uL1 (Alkaliphilus oremlandii (strain OhILAs) (Clostridium oremlandii (strain OhILAs))).